We begin with the raw amino-acid sequence, 177 residues long: Bifunctional protein PyrR (177 aa).

The short motif at 97–109 (IILVDDVLYTGRT) is the PRPP-binding element.

This sequence belongs to the purine/pyrimidine phosphoribosyltransferase family. PyrR subfamily.

It catalyses the reaction UMP + diphosphate = 5-phospho-alpha-D-ribose 1-diphosphate + uracil. Regulates the transcription of the pyrimidine nucleotide (pyr) operon in response to exogenous pyrimidines. Its function is as follows. Also displays a weak uracil phosphoribosyltransferase activity which is not physiologically significant. The protein is Bifunctional protein PyrR of Nitrosococcus oceani (strain ATCC 19707 / BCRC 17464 / JCM 30415 / NCIMB 11848 / C-107).